The following is a 312-amino-acid chain: tRNA uridine(34) hydroxylase (312 aa).

In terms of domain architecture, Rhodanese spans 130 to 225; that stretch reads RGDEVVFFDG…YGEQFGNKGL (96 aa). Cys185 (cysteine persulfide intermediate) is an active-site residue.

The protein belongs to the TrhO family.

The catalysed reaction is uridine(34) in tRNA + AH2 + O2 = 5-hydroxyuridine(34) in tRNA + A + H2O. Catalyzes oxygen-dependent 5-hydroxyuridine (ho5U) modification at position 34 in tRNAs. In Corynebacterium glutamicum (strain ATCC 13032 / DSM 20300 / JCM 1318 / BCRC 11384 / CCUG 27702 / LMG 3730 / NBRC 12168 / NCIMB 10025 / NRRL B-2784 / 534), this protein is tRNA uridine(34) hydroxylase.